The following is a 340-amino-acid chain: MQLSDFDYHLPEALIAQHPPAERGASRLLHVDGMTLSDLSFADLPSRLQAGDLLVFNDTRVIRARLFGEKASGGKVEALIERVLDDHTALAHVRASKSPKPGSRLIFAGRWEAEMVERHDSMFKLRFLAEENVYDILEASGKLPLPPYIERSAEHDDDERYQTVYAREQGAVAAPTAGLHFTDAMLATLQAQGIATAFVTLHVGAGTFQPVKVDNVAEHKMHSEIYDIPQATVDAIAAARARGGRVVAVGTTSVRALESAARHGELKAGRGETDIFITPGYRFRVVDRLLTNFHLPKSTLLMLVSAFAGYDEIFQAYRHAVEKEYRFFSYGDAMLLEKKV.

The protein belongs to the QueA family. Monomer.

Its subcellular location is the cytoplasm. It carries out the reaction 7-aminomethyl-7-carbaguanosine(34) in tRNA + S-adenosyl-L-methionine = epoxyqueuosine(34) in tRNA + adenine + L-methionine + 2 H(+). Its pathway is tRNA modification; tRNA-queuosine biosynthesis. Transfers and isomerizes the ribose moiety from AdoMet to the 7-aminomethyl group of 7-deazaguanine (preQ1-tRNA) to give epoxyqueuosine (oQ-tRNA). This chain is S-adenosylmethionine:tRNA ribosyltransferase-isomerase, found in Chromobacterium violaceum (strain ATCC 12472 / DSM 30191 / JCM 1249 / CCUG 213 / NBRC 12614 / NCIMB 9131 / NCTC 9757 / MK).